Consider the following 509-residue polypeptide: Bifunctional purine biosynthesis protein PurH (509 aa).

The MGS-like domain maps to 1-144; that stretch reads MKRALISVSD…KNYAAVTVVV (144 aa).

It belongs to the PurH family.

The catalysed reaction is (6R)-10-formyltetrahydrofolate + 5-amino-1-(5-phospho-beta-D-ribosyl)imidazole-4-carboxamide = 5-formamido-1-(5-phospho-D-ribosyl)imidazole-4-carboxamide + (6S)-5,6,7,8-tetrahydrofolate. It catalyses the reaction IMP + H2O = 5-formamido-1-(5-phospho-D-ribosyl)imidazole-4-carboxamide. It participates in purine metabolism; IMP biosynthesis via de novo pathway; 5-formamido-1-(5-phospho-D-ribosyl)imidazole-4-carboxamide from 5-amino-1-(5-phospho-D-ribosyl)imidazole-4-carboxamide (10-formyl THF route): step 1/1. The protein operates within purine metabolism; IMP biosynthesis via de novo pathway; IMP from 5-formamido-1-(5-phospho-D-ribosyl)imidazole-4-carboxamide: step 1/1. This is Bifunctional purine biosynthesis protein PurH from Listeria monocytogenes serovar 1/2a (strain ATCC BAA-679 / EGD-e).